The sequence spans 180 residues: Large ribosomal subunit protein uL5 (180 aa).

It belongs to the universal ribosomal protein uL5 family. In terms of assembly, part of the 50S ribosomal subunit; part of the 5S rRNA/L5/L18/L25 subcomplex. Contacts the 5S rRNA and the P site tRNA. Forms a bridge to the 30S subunit in the 70S ribosome.

Its function is as follows. This is one of the proteins that bind and probably mediate the attachment of the 5S RNA into the large ribosomal subunit, where it forms part of the central protuberance. In the 70S ribosome it contacts protein S13 of the 30S subunit (bridge B1b), connecting the 2 subunits; this bridge is implicated in subunit movement. Contacts the P site tRNA; the 5S rRNA and some of its associated proteins might help stabilize positioning of ribosome-bound tRNAs. This Streptococcus thermophilus (strain ATCC BAA-491 / LMD-9) protein is Large ribosomal subunit protein uL5.